The chain runs to 236 residues: Class B acid phosphatase (236 aa).

An N-terminal signal peptide occupies residues 1–22 (MNHTLRSITLVLACVASLSANA). Asp70 serves as the catalytic Nucleophile. Positions 70 and 72 each coordinate Mg(2+). The Proton donor role is filled by Asp72. Substrate is bound by residues 138 to 139 (TG) and Lys176. Asp191 contributes to the Mg(2+) binding site.

This sequence belongs to the class B bacterial acid phosphatase family. As to quaternary structure, homotetramer. Mg(2+) is required as a cofactor.

It is found in the periplasm. It catalyses the reaction a phosphate monoester + H2O = an alcohol + phosphate. Dephosphorylates several organic phosphate monoesters. Also has a phosphotransferase activity catalyzing the transfer of low-energy phosphate groups from organic phosphate monoesters to free hydroxyl groups of various organic compounds. The polypeptide is Class B acid phosphatase (Marinomonas sp. (strain MWYL1)).